We begin with the raw amino-acid sequence, 457 residues long: Phosphatidate cytidylyltransferase (457 aa).

Helical transmembrane passes span 71 to 91 (VMISGFFITLASGHAWCIVLI), 154 to 174 (FIVTNHKFICYCLYLMGFVLF), 188 to 208 (GSLCVTHMVLLLVVFQAHLII), 214 to 234 (GLFWFLLPCGLVIVNDIFAYL), 255 to 275 (GFLGAWFFTALASIILTRILS), and 330 to 350 (FHALNLATFASLFAPFGGFFA).

Belongs to the CDS family. Homodimer. It depends on Mg(2+) as a cofactor.

It localises to the endoplasmic reticulum membrane. It is found in the cytoplasmic vesicle. Its subcellular location is the secretory vesicle. The catalysed reaction is a 1,2-diacyl-sn-glycero-3-phosphate + CTP + H(+) = a CDP-1,2-diacyl-sn-glycerol + diphosphate. It functions in the pathway phospholipid metabolism; CDP-diacylglycerol biosynthesis; CDP-diacylglycerol from sn-glycerol 3-phosphate: step 3/3. Its function is as follows. Supplies CDP-diacylglycerol, which may play an important role as both a precursor to phosphoinositide biosynthesis in the plasma membrane and as a negative effector of phosphatidylinositol 4-kinase activity, thereby exerting an effect on cell proliferation via a lipid-dependent signal transduction cascade. In Saccharomyces cerevisiae (strain ATCC 204508 / S288c) (Baker's yeast), this protein is Phosphatidate cytidylyltransferase (CDS1).